Reading from the N-terminus, the 367-residue chain is Flagellar P-ring protein (367 aa).

The signal sequence occupies residues 1–21 (MKIIQTFFIITLLWLSQGVQA).

It belongs to the FlgI family. As to quaternary structure, the basal body constitutes a major portion of the flagellar organelle and consists of four rings (L,P,S, and M) mounted on a central rod.

It localises to the periplasm. Its subcellular location is the bacterial flagellum basal body. In terms of biological role, assembles around the rod to form the L-ring and probably protects the motor/basal body from shearing forces during rotation. The chain is Flagellar P-ring protein from Nitrosococcus oceani (strain ATCC 19707 / BCRC 17464 / JCM 30415 / NCIMB 11848 / C-107).